The primary structure comprises 370 residues: Phosphoribosylformylglycinamidine cyclo-ligase (370 aa).

Belongs to the AIR synthase family.

It is found in the cytoplasm. It catalyses the reaction 2-formamido-N(1)-(5-O-phospho-beta-D-ribosyl)acetamidine + ATP = 5-amino-1-(5-phospho-beta-D-ribosyl)imidazole + ADP + phosphate + H(+). It functions in the pathway purine metabolism; IMP biosynthesis via de novo pathway; 5-amino-1-(5-phospho-D-ribosyl)imidazole from N(2)-formyl-N(1)-(5-phospho-D-ribosyl)glycinamide: step 2/2. In Rhodospirillum rubrum (strain ATCC 11170 / ATH 1.1.1 / DSM 467 / LMG 4362 / NCIMB 8255 / S1), this protein is Phosphoribosylformylglycinamidine cyclo-ligase.